The sequence spans 353 residues: Photosystem II D2 protein (353 aa).

T2 bears the N-acetylthreonine mark. T2 bears the Phosphothreonine mark. A helical transmembrane segment spans residues 41-61 (CAYFALGGWFTGTTFVTSWYT). H118 lines the chlorophyll a pocket. The helical transmembrane segment at 125-141 (GFMLRQFELSRSVQLRP) threads the bilayer. Pheophytin a is bound by residues Q130 and N143. Residues 153–166 (VFVSVFLIYPLGQS) traverse the membrane as a helical segment. H198 provides a ligand contact to chlorophyll a. A helical membrane pass occupies residues 208 to 228 (AALLCAIHGATVENTLFEDGD). Residues H215 and F262 each contribute to the a plastoquinone site. Fe cation is bound at residue H215. Fe cation is bound at residue H269. A helical membrane pass occupies residues 279–295 (GLWMSALGVVGLALNLR).

This sequence belongs to the reaction center PufL/M/PsbA/D family. As to quaternary structure, PSII is composed of 1 copy each of membrane proteins PsbA, PsbB, PsbC, PsbD, PsbE, PsbF, PsbH, PsbI, PsbJ, PsbK, PsbL, PsbM, PsbT, PsbX, PsbY, PsbZ, Psb30/Ycf12, at least 3 peripheral proteins of the oxygen-evolving complex and a large number of cofactors. It forms dimeric complexes. The D1/D2 heterodimer binds P680, chlorophylls that are the primary electron donor of PSII, and subsequent electron acceptors. It shares a non-heme iron and each subunit binds pheophytin, quinone, additional chlorophylls, carotenoids and lipids. There is also a Cl(-1) ion associated with D1 and D2, which is required for oxygen evolution. The PSII complex binds additional chlorophylls, carotenoids and specific lipids. is required as a cofactor.

It is found in the plastid. Its subcellular location is the chloroplast thylakoid membrane. The enzyme catalyses 2 a plastoquinone + 4 hnu + 2 H2O = 2 a plastoquinol + O2. In terms of biological role, photosystem II (PSII) is a light-driven water:plastoquinone oxidoreductase that uses light energy to abstract electrons from H(2)O, generating O(2) and a proton gradient subsequently used for ATP formation. It consists of a core antenna complex that captures photons, and an electron transfer chain that converts photonic excitation into a charge separation. The D1/D2 (PsbA/PsbD) reaction center heterodimer binds P680, the primary electron donor of PSII as well as several subsequent electron acceptors. D2 is needed for assembly of a stable PSII complex. The polypeptide is Photosystem II D2 protein (Arabis hirsuta (Hairy rock-cress)).